The chain runs to 261 residues: Phosphoribosylaminoimidazole-succinocarboxamide synthase (261 aa).

Belongs to the SAICAR synthetase family.

The catalysed reaction is 5-amino-1-(5-phospho-D-ribosyl)imidazole-4-carboxylate + L-aspartate + ATP = (2S)-2-[5-amino-1-(5-phospho-beta-D-ribosyl)imidazole-4-carboxamido]succinate + ADP + phosphate + 2 H(+). It participates in purine metabolism; IMP biosynthesis via de novo pathway; 5-amino-1-(5-phospho-D-ribosyl)imidazole-4-carboxamide from 5-amino-1-(5-phospho-D-ribosyl)imidazole-4-carboxylate: step 1/2. In Novosphingobium aromaticivorans (strain ATCC 700278 / DSM 12444 / CCUG 56034 / CIP 105152 / NBRC 16084 / F199), this protein is Phosphoribosylaminoimidazole-succinocarboxamide synthase.